A 388-amino-acid chain; its full sequence is tRNA 2-selenouridine synthase (388 aa).

The 124-residue stretch at 15 to 138 folds into the Rhodanese domain; it reads FTADTPLIDV…ARQFLINTID (124 aa). C98 acts as the S-selanylcysteine intermediate in catalysis.

It belongs to the SelU family. Monomer.

It catalyses the reaction 5-methylaminomethyl-2-thiouridine(34) in tRNA + selenophosphate + (2E)-geranyl diphosphate + H2O + H(+) = 5-methylaminomethyl-2-selenouridine(34) in tRNA + (2E)-thiogeraniol + phosphate + diphosphate. The catalysed reaction is 5-methylaminomethyl-2-thiouridine(34) in tRNA + (2E)-geranyl diphosphate = 5-methylaminomethyl-S-(2E)-geranyl-thiouridine(34) in tRNA + diphosphate. The enzyme catalyses 5-methylaminomethyl-S-(2E)-geranyl-thiouridine(34) in tRNA + selenophosphate + H(+) = 5-methylaminomethyl-2-(Se-phospho)selenouridine(34) in tRNA + (2E)-thiogeraniol. It carries out the reaction 5-methylaminomethyl-2-(Se-phospho)selenouridine(34) in tRNA + H2O = 5-methylaminomethyl-2-selenouridine(34) in tRNA + phosphate. Its function is as follows. Involved in the post-transcriptional modification of the uridine at the wobble position (U34) of tRNA(Lys), tRNA(Glu) and tRNA(Gln). Catalyzes the conversion of 2-thiouridine (S2U-RNA) to 2-selenouridine (Se2U-RNA). Acts in a two-step process involving geranylation of 2-thiouridine (S2U) to S-geranyl-2-thiouridine (geS2U) and subsequent selenation of the latter derivative to 2-selenouridine (Se2U) in the tRNA chain. The chain is tRNA 2-selenouridine synthase from Nitrosomonas eutropha (strain DSM 101675 / C91 / Nm57).